A 401-amino-acid chain; its full sequence is Adenosine 3'-phospho 5'-phosphosulfate transporter 2 (401 aa).

N-linked (GlcNAc...) asparagine glycosylation is found at asparagine 12 and asparagine 71. 6 helical membrane passes run 78–98 (LTQF…YGYL), 111–131 (YGWY…LIEL), 147–167 (MIIA…LGYL), 170–190 (PTQV…GVFI), 200–220 (VSAA…DSTI), and 223–243 (NFNL…AVIG). Asparagine 254 is a glycosylation site (N-linked (GlcNAc...) asparagine). 4 helical membrane passes run 267–287 (IGFV…PAVT), 298–317 (GYAF…VLAL), 324–346 (LIAV…IFFA), and 349–369 (FTFQ…LNVY).

It belongs to the nucleotide-sugar transporter family. SLC35B subfamily.

The protein localises to the golgi apparatus membrane. The catalysed reaction is 3'-phosphoadenylyl sulfate(in) + adenosine 3',5'-bisphosphate(out) = 3'-phosphoadenylyl sulfate(out) + adenosine 3',5'-bisphosphate(in). Functionally, probably functions as a 3'-phosphoadenylyl sulfate:adenosine 3',5'-bisphosphate antiporter at the Golgi membranes. Mediates the transport from the cytosol into the lumen of the Golgi of 3'-phosphoadenylyl sulfate/adenosine 3'-phospho 5'-phosphosulfate (PAPS), a universal sulfuryl donor for sulfation events that take place in that compartment. This Pongo abelii (Sumatran orangutan) protein is Adenosine 3'-phospho 5'-phosphosulfate transporter 2.